Reading from the N-terminus, the 413-residue chain is Imidazolonepropionase (413 aa).

Histidine 70 and histidine 72 together coordinate Fe(3+). Zn(2+) is bound by residues histidine 70 and histidine 72. Arginine 79, tyrosine 142, and histidine 175 together coordinate 4-imidazolone-5-propanoate. Tyrosine 142 provides a ligand contact to N-formimidoyl-L-glutamate. Histidine 240 provides a ligand contact to Fe(3+). Residue histidine 240 coordinates Zn(2+). 4-imidazolone-5-propanoate is bound at residue glutamate 243. Aspartate 315 is a binding site for Fe(3+). Zn(2+) is bound at residue aspartate 315. Residues asparagine 317 and glycine 319 each coordinate N-formimidoyl-L-glutamate. Serine 320 provides a ligand contact to 4-imidazolone-5-propanoate.

This sequence belongs to the metallo-dependent hydrolases superfamily. HutI family. It depends on Zn(2+) as a cofactor. The cofactor is Fe(3+).

Its subcellular location is the cytoplasm. The catalysed reaction is 4-imidazolone-5-propanoate + H2O = N-formimidoyl-L-glutamate. It functions in the pathway amino-acid degradation; L-histidine degradation into L-glutamate; N-formimidoyl-L-glutamate from L-histidine: step 3/3. In terms of biological role, catalyzes the hydrolytic cleavage of the carbon-nitrogen bond in imidazolone-5-propanoate to yield N-formimidoyl-L-glutamate. It is the third step in the universal histidine degradation pathway. In Treponema denticola (strain ATCC 35405 / DSM 14222 / CIP 103919 / JCM 8153 / KCTC 15104), this protein is Imidazolonepropionase.